Consider the following 736-residue polypeptide: Dynamin-1-like protein (736 aa).

Residue methionine 1 is modified to N-acetylmethionine. Residues 22-302 (IIQLPQIVVV…LMHHIRDCLP (281 aa)) form the Dynamin-type G domain. The segment at 32–39 (GTQSSGKS) is G1 motif. 32-40 (GTQSSGKSS) contacts GTP. Positions 58–60 (VTR) are G2 motif. Positions 146–149 (DLPG) are G3 motif. Positions 215–218 (TKLD) are G4 motif. GTP is bound by residues 215-221 (TKLDLMD) and 246-249 (NRSQ). The segment at 245-248 (VNRS) is G5 motif. The tract at residues 344 to 489 (YCNTIEGTAK…NEMVHNLVAI (146 aa)) is middle domain. Residues 448–685 (NYSTQELLRF…NHVKDTLQSE (238 aa)) form an interaction with GSK3B region. The interval 502 to 569 (ADACGLMNNN…IQDNRRETKN (68 aa)) is b domain. Residues 522 to 554 (RELPSAGSRDKSSKVPSALAPASQEPPPAASAE) are disordered. Serine 529 carries the phosphoserine modification. Residues lysine 532, lysine 535, lysine 558, and lysine 568 each participate in a glycyl lysine isopeptide (Lys-Gly) (interchain with G-Cter in SUMO) cross-link. A C-terminal dimerization domain region spans residues 542–736 (PASQEPPPAA…IAEIRETHLW (195 aa)). Residues 566–588 (ETKNVPSAGGGIGDGGQEPTTGN) are disordered. O-linked (GlcNAc) threonine glycosylation is found at threonine 585 and threonine 586. Lysine 594 participates in a covalent cross-link: Glycyl lysine isopeptide (Lys-Gly) (interchain with G-Cter in SUMO). At lysine 597 the chain carries N6-acetyllysine; alternate. Lysine 597 is covalently cross-linked (Glycyl lysine isopeptide (Lys-Gly) (interchain with G-Cter in SUMO); alternate). Lysine 606 participates in a covalent cross-link: Glycyl lysine isopeptide (Lys-Gly) (interchain with G-Cter in SUMO). The residue at position 607 (serine 607) is a Phosphoserine. Lysine 608 participates in a covalent cross-link: Glycyl lysine isopeptide (Lys-Gly) (interchain with G-Cter in SUMO). Serine 616 carries the post-translational modification Phosphoserine; by PINK1. Serine 637 carries the phosphoserine; by CAMK1 and PKA modification. At cysteine 644 the chain carries S-nitrosocysteine. A GED domain is found at 644–735 (CEVIERLIKS…IIAEIRETHL (92 aa)). The segment at 654 to 668 (YFLIVRKNIQDSVPK) is important for homodimerization.

It belongs to the TRAFAC class dynamin-like GTPase superfamily. Dynamin/Fzo/YdjA family. As to quaternary structure, homotetramer; dimerizes through the N-terminal GTP-middle region of one molecule binding to the GED domain of another DNM1L molecule. Oligomerizes in a GTP-dependent manner to form membrane-associated tubules with a spiral pattern. Interacts with GSK3B and MARCHF5. Interacts (via the GTPase and B domains) with UBE2I; the interaction promotes sumoylation of DNM1L, mainly in its B domain. Interacts with PPP3CA; the interaction dephosphorylates DNM1L and regulates its transition to mitochondria. Interacts with BCL2L1 isoform BCL-X(L) and CLTA; DNM1L and BCL2L1 isoform BCL-X(L) may form a complex in synaptic vesicles that also contains clathrin and MFF. Interacts with MFF; the interaction is inhibited by C11orf65/MFI. Interacts with FIS1. Interacts with MIEF2 and MIEF1; GTP-dependent, regulates GTP hydrolysis and DNM1L oligomerization. Interacts with PGAM5; this interaction leads to dephosphorylation at Ser-656 and activation of GTPase activity and eventually to mitochondria fragmentation. Interacts with RALBP1; during mitosis, recruits DNM1L to the mitochondrion and mediates its activation by the mitotic kinase cyclin B-CDK1. Interacts with FUNDC1; this interaction recruits DNM1L/DRP1 at ER-mitochondria contact sites. In terms of processing, phosphorylation/dephosphorylation events on two sites near the GED domain regulate mitochondrial fission. Phosphorylation on Ser-637 inhibits mitochondrial fission probably through preventing intramolecular interaction. Dephosphorylated on this site by PPP3CA which promotes mitochondrial fission. Phosphorylation on Ser-616 by Pink1 activates the GTPase activity and promotes mitochondrial fission. Phosphorylated in a circadian manner at Ser-637. Dephosphorylated by PGAM5. Post-translationally, sumoylated on various lysine residues within the B domain, probably by MUL1. Sumoylation positively regulates mitochondrial fission. Desumoylated by SENP5 during G2/M transition of mitosis. Appears to be linked to its catalytic activity. S-nitrosylation increases DNM1L dimerization, mitochondrial fission and causes neuronal damage. In terms of processing, O-GlcNAcylation augments the level of the GTP-bound active form of DNM1L and induces translocation from the cytoplasm to mitochondria in cardiomyocytes. It also decreases phosphorylation at Ser-637. Post-translationally, ubiquitination by MARCHF5 affects mitochondrial morphology. As to expression, expressed in the cerebellum and in several regions of the cerebrum and diencephalon. Strongly expressed in the cerebellar Purkinje cells and in the pontile giant neurons. Widely expressed. In terms of tissue distribution, brain-specific. As to expression, brain-specific (at protein level). Expressed in most of the subregions of the brain, including the cerebellum, midbrain, hippocampus, striatum, cerebral cortex, and brain stem. Weakly expressed in the olfactory bulb.

The protein resides in the cytoplasm. The protein localises to the cytosol. It localises to the golgi apparatus. Its subcellular location is the endomembrane system. It is found in the mitochondrion outer membrane. The protein resides in the peroxisome. The protein localises to the membrane. It localises to the clathrin-coated pit. Its subcellular location is the cytoplasmic vesicle. It is found in the secretory vesicle. The protein resides in the synaptic vesicle membrane. The protein localises to the lysosome. It localises to the late endosome. Its subcellular location is the cell membrane. It is found in the postsynaptic density. It catalyses the reaction GTP + H2O = GDP + phosphate + H(+). In terms of biological role, functions in mitochondrial and peroxisomal division. Mediates membrane fission through oligomerization into membrane-associated tubular structures that wrap around the scission site to constrict and sever the mitochondrial membrane through a GTP hydrolysis-dependent mechanism. The specific recruitment at scission sites is mediated by membrane receptors like MFF, MIEF1 and MIEF2 for mitochondrial membranes. While the recruitment by the membrane receptors is GTP-dependent, the following hydrolysis of GTP induces the dissociation from the receptors and allows DNM1L filaments to curl into closed rings that are probably sufficient to sever a double membrane. Acts downstream of PINK1 to promote mitochondrial fission in a PRKN-dependent manner. Plays an important role in mitochondrial fission during mitosis. Required for formation of endocytic vesicles. Through its function in mitochondrial division, ensures the survival of at least some types of postmitotic neurons, including Purkinje cells, by suppressing oxidative damage. Required for normal brain development, including that of cerebellum. Facilitates developmentally regulated apoptosis during neural tube formation. Required for a normal rate of cytochrome c release and caspase activation during apoptosis; this requirement may depend upon the cell type and the physiological apoptotic cues. Proposed to regulate synaptic vesicle membrane dynamics through association with BCL2L1 isoform Bcl-X(L) which stimulates its GTPase activity in synaptic vesicles; the function may require its recruitment by MFF to clathrin-containing vesicles. Required for programmed necrosis execution. Rhythmic control of its activity following phosphorylation at Ser-637 is essential for the circadian control of mitochondrial ATP production. Functionally, regulates postsynaptic clathrin-mediated endocytosis by positioning the endocytic zone at the postsynaptic density, independently of mitochondrial division. The chain is Dynamin-1-like protein from Mus musculus (Mouse).